A 213-amino-acid chain; its full sequence is Nucleoside triphosphate pyrophosphatase (213 aa).

Catalysis depends on Asp-77, which acts as the Proton acceptor.

It belongs to the Maf family. Requires a divalent metal cation as cofactor.

The protein localises to the cytoplasm. It catalyses the reaction a ribonucleoside 5'-triphosphate + H2O = a ribonucleoside 5'-phosphate + diphosphate + H(+). The enzyme catalyses a 2'-deoxyribonucleoside 5'-triphosphate + H2O = a 2'-deoxyribonucleoside 5'-phosphate + diphosphate + H(+). Functionally, nucleoside triphosphate pyrophosphatase. May have a dual role in cell division arrest and in preventing the incorporation of modified nucleotides into cellular nucleic acids. The sequence is that of Nucleoside triphosphate pyrophosphatase from Cutibacterium acnes (strain DSM 16379 / KPA171202) (Propionibacterium acnes).